We begin with the raw amino-acid sequence, 229 residues long: Cytidylate kinase (229 aa).

Residue 12 to 20 (GPSGSGKGT) participates in ATP binding.

Belongs to the cytidylate kinase family. Type 1 subfamily.

It is found in the cytoplasm. It catalyses the reaction CMP + ATP = CDP + ADP. The catalysed reaction is dCMP + ATP = dCDP + ADP. The polypeptide is Cytidylate kinase (Pseudomonas fluorescens (strain SBW25)).